A 290-amino-acid polypeptide reads, in one-letter code: tRNA-cytidine(32) 2-sulfurtransferase (290 aa).

The PP-loop motif signature appears at 36-41 (SGGKDS). [4Fe-4S] cluster contacts are provided by Cys111, Cys114, and Cys202. The disordered stretch occupies residues 259–290 (DPWLDAEDEEAEDCGEPAGDGVVSLGGARGGR). Over residues 262 to 273 (LDAEDEEAEDCG) the composition is skewed to acidic residues.

It belongs to the TtcA family. In terms of assembly, homodimer. Mg(2+) is required as a cofactor. The cofactor is [4Fe-4S] cluster.

The protein localises to the cytoplasm. It carries out the reaction cytidine(32) in tRNA + S-sulfanyl-L-cysteinyl-[cysteine desulfurase] + AH2 + ATP = 2-thiocytidine(32) in tRNA + L-cysteinyl-[cysteine desulfurase] + A + AMP + diphosphate + H(+). It participates in tRNA modification. Catalyzes the ATP-dependent 2-thiolation of cytidine in position 32 of tRNA, to form 2-thiocytidine (s(2)C32). The sulfur atoms are provided by the cysteine/cysteine desulfurase (IscS) system. The sequence is that of tRNA-cytidine(32) 2-sulfurtransferase from Anaeromyxobacter dehalogenans (strain 2CP-C).